The sequence spans 309 residues: tRNA uridine(34) hydroxylase (309 aa).

The region spanning 130 to 224 (SDPDTIVIDT…YLEEVPQEES (95 aa)) is the Rhodanese domain. C184 acts as the Cysteine persulfide intermediate in catalysis.

This sequence belongs to the TrhO family.

It carries out the reaction uridine(34) in tRNA + AH2 + O2 = 5-hydroxyuridine(34) in tRNA + A + H2O. In terms of biological role, catalyzes oxygen-dependent 5-hydroxyuridine (ho5U) modification at position 34 in tRNAs. In Rhizobium etli (strain ATCC 51251 / DSM 11541 / JCM 21823 / NBRC 15573 / CFN 42), this protein is tRNA uridine(34) hydroxylase.